The sequence spans 1452 residues: Arf-GAP with Rho-GAP domain, ANK repeat and PH domain-containing protein 1 (1452 aa).

In terms of domain architecture, SAM spans 6 to 70 (DAALSVAEWL…LAGLHRAHAP (65 aa)). The tract at residues 81-90 (PVPMKRHIFR) is required for interaction with SH3KBP1. Disordered regions lie at residues 87–258 (HIFR…LPSR) and 271–304 (EGEELSGDDSEDDDDHAYEGIPNGGWPTSGLNPP). 3 stretches are compositionally biased toward pro residues: residues 92-104 (PPVPVTPPEPPPT), 154-167 (SVPPVPPRTGPPYP), and 205-225 (PLQPPSPPPCPPVIPPKPPRL). Composition is skewed to acidic residues over residues 228–239 (EFDDSDYDDVPE) and 271–286 (EGEELSGDDSEDDDDH). At Ser232 the chain carries Phosphoserine. Tyr234 carries the post-translational modification Phosphotyrosine; by PTK6. The region spanning 329-421 (PVIKAGWLDK…WMQALQQAVV (93 aa)) is the PH 1 domain. Ser430 carries the post-translational modification Phosphoserine. Positions 442–531 (QPDRAGSLEL…WLEAMQGAIA (90 aa)) constitute a PH 2 domain. The residue at position 506 (Tyr506) is a Phosphotyrosine. The Arf-GAP domain occupies 537-662 (SEVAERIWAA…RYHPLFGNQE (126 aa)). Residues 552–575 (CADCGAAQPDWASINLCVVICKRC) form a C4-type zinc finger. Residue Ser740 is modified to Phosphoserine. The 108-residue stretch at 745–852 (TVSHSGFLYK…WVKCIAKAFV (108 aa)) folds into the PH 3 domain. Residues 956–1141 (ASLGDTLSEQ…DLINHYVVVF (186 aa)) enclose the Rho-GAP domain. Residues 1174–1263 (GDFICTVYLE…SHLVVKKYQS (90 aa)) enclose the Ras-associating domain. Residues 1276–1398 (GDTKHGMMKF…WFATFLSVQH (123 aa)) enclose the PH 4 domain. Phosphoserine is present on residues Ser1430 and Ser1437.

Interacts with SH3KBP1/CIN85 (via SH3 domains). The interaction is independent of EGF and does not affect ARAP1 GTPase-activating activity but is involved in regulating ubiquitination and endocytic trafficking of EGFR. ARAP1 competes with E3 ubiquitin-protein ligase CBL for binding to SH3KBP1, preventing interaction of CBL with SH3KBP1; this is likely to regulate SH3KBP1-mediated internalization of EGFR. Interacts with TNFRSF10A. Post-translationally, phosphorylated by PTK6 following EGF stimulation which enhances EGFR signaling by delaying EGFR down-regulation; the interaction is mediated by the SH2 domain of PTK6. Phosphorylation promotes association with the Golgi apparatus and endosomes. Expressed in the retina where it is detected in Mueller glia (at protein level). Also detected in the retinal pigment epithelium (at protein level). Expressed in osteoclasts (at protein level).

The protein resides in the cytoplasm. The protein localises to the golgi apparatus. Its subcellular location is the trans-Golgi network. It is found in the golgi stack membrane. It localises to the cell membrane. The protein resides in the endosome. The protein localises to the multivesicular body. Its subcellular location is the cell projection. It is found in the ruffle. It localises to the podosome. The protein resides in the early endosome. In terms of biological role, phosphatidylinositol 3,4,5-trisphosphate-dependent GTPase-activating protein that modulates actin cytoskeleton remodeling by regulating ARF and RHO family members. Activated by phosphatidylinositol 3,4,5-trisphosphate (PtdIns(3,4,5)P3) binding and, to a lesser extent, by phosphatidylinositol 3,4-bisphosphate (PtdIns(3,4)P2) binding. Has a preference for ARF1 and ARF5. Positively regulates the ring size of circular dorsal ruffles and promotes macropinocytosis. Acts as a bridging factor in osteoclasts to control actin and membrane dynamics. Regulates the condensing of osteoclast podosomes into sealing zones which segregate the bone-facing membrane from other membrane domains and are required for osteoclast resorption activity. Also regulates recruitment of the AP-3 complex to endosomal membranes and trafficking of lysosomal membrane proteins to the ruffled membrane border of osteoclasts to modulate bone resorption. Regulates the endocytic trafficking of EGFR. Regulates the incorporation of CD63 and CD9 into multivesicular bodies. Required in the retinal pigment epithelium (RPE) for photoreceptor survival due to its role in promoting RPE phagocytosis. The chain is Arf-GAP with Rho-GAP domain, ANK repeat and PH domain-containing protein 1 from Mus musculus (Mouse).